The sequence spans 673 residues: Probable boron transporter 7 (673 aa).

At 1 to 35 (MEGVKFPFGGIINDFNGRRKCYKQDWLAAFNSGVR) the chain is on the cytoplasmic side. A helical transmembrane segment spans residues 36–56 (ILAPTLYIFIASALPVIAFGE). Over 57 to 75 (QLSRETDRSLGIAESLAST) the chain is Extracellular. Residues 76 to 96 (ALCGIIHSVFGGQPLLIVGVA) form a helical membrane-spanning segment. The Cytoplasmic segment spans residues 97–121 (EPTIIMYTYLHSFSKSRPELGQKLY). The helical transmembrane segment at 122-142 (LAWAGWVCVWTAVLLMLLAML) threads the bilayer. Residues 143–160 (NACNIISRFTRIAGELFG) are Extracellular-facing. A helical membrane pass occupies residues 161-181 (MLITVLFIQEAVKGLIGEFLV). The Cytoplasmic segment spans residues 182 to 197 (PKSDDPSLEVYQFQWR). The helical transmembrane segment at 198-218 (YTNGLLAVIFSFGLLYTALKS) threads the bilayer. The Extracellular portion of the chain corresponds to 219 to 233 (RRARSWKYGFRWMRG). A helical transmembrane segment spans residues 234–254 (FIGDYGTLLMLVLWSAFSYTV). The Cytoplasmic portion of the chain corresponds to 255–289 (PRNLPEGVPRRLELPLPWASESLYHWTVVKDMAKV). The helical transmembrane segment at 290 to 310 (PPLYILAAFIPAIMIAGLYFF) threads the bilayer. Over 311 to 330 (DHCVSAQMAQQKEFNLKNPT) the chain is Extracellular. The helical transmembrane segment at 331-351 (AYHYDIFILGIMTLICGLLGL) threads the bilayer. The Cytoplasmic portion of the chain corresponds to 352 to 468 (PPSNGVIPQS…EQRVSNLLQS (117 aa)). The chain crosses the membrane as a helical span at residues 469–489 (VLVGLLILAVPVLRMIPTSVL). The Extracellular portion of the chain corresponds to 490–556 (WGYFTYMAVD…QLLYFLICYG (67 aa)). A helical transmembrane segment spans residues 557–577 (VTWIPVGGILFPLPFFILIAL). The Cytoplasmic segment spans residues 578–673 (RQYILQRLFD…SQMVKIYNHS (96 aa)).

It belongs to the anion exchanger (TC 2.A.31.3) family.

It is found in the membrane. Putative boron transporter. Boron is essential for maintaining the integrity of plants cell walls. The protein is Probable boron transporter 7 (BOR7) of Arabidopsis thaliana (Mouse-ear cress).